We begin with the raw amino-acid sequence, 524 residues long: DNA damage-binding protein CMR1 (524 aa).

The segment at 35 to 79 (EKIIPKPAPPKPKRASAPRAKREPVKRETARPTRQSSRLAGLDAD) is disordered. Over residues 54-65 (AKREPVKRETAR) the composition is skewed to basic and acidic residues. 7 WD repeats span residues 184–225 (LVPQ…VKAE), 245–285 (THSR…STEA), 295–332 (LPISAIDMPTSDPNMIIFSTLQGTLGRHDLRTKSSTAE), 336–376 (LTDQ…GKGD), 385–425 (THDS…KWTA), 447–490 (GRWV…LAQL), and 493–524 (DGITAVPAVAHFHPTMDWVAGGNGSGKLCLWM).

Belongs to the WD repeat DDB2/WDR76 family.

Functionally, DNA-binding protein that binds to both single- and double-stranded DNA. Binds preferentially to UV-damaged DNA. May be involved in DNA-metabolic processes. The protein is DNA damage-binding protein CMR1 of Chaetomium globosum (strain ATCC 6205 / CBS 148.51 / DSM 1962 / NBRC 6347 / NRRL 1970) (Soil fungus).